We begin with the raw amino-acid sequence, 588 residues long: Protein cereblon (588 aa).

Disordered regions lie at residues 1 to 107 and 159 to 197; these read MDDE…DDSD and QERR…DIGF. Residues 41–50 show a composition bias toward polar residues; the sequence is AWNNATQDEQ. Acidic residues predominate over residues 75 to 85; that stretch reads MVEDVLQDDTA. Positions 86-96 are enriched in polar residues; it reads SEGSHPSSDMS. Basic and acidic residues predominate over residues 159–168; that stretch reads QERRRSRTSE. Pro residues predominate over residues 181–192; the sequence is NDPPPQQPPRPP. A Lon N-terminal domain is found at 228 to 454; that stretch reads HMLIFLHQHI…LIKSTFKDES (227 aa). The CULT domain occupies 453 to 562; the sequence is ESLFFCRYCN…LAGSSVRIGK (110 aa). Zn(2+)-binding residues include Cys458, Cys461, Cys527, and Cys530.

It belongs to the CRBN family. As to quaternary structure, likely a component of a DCX (DDB1-CUL4-X-box) protein ligase complex. May interact with pic/DDB1. In terms of processing, ubiquitinated.

It is found in the nucleus. It functions in the pathway protein modification; protein ubiquitination. Substrate recognition component of a DCX (DDB1-CUL4-X-box) E3 protein ligase complex that mediates the ubiquitination and subsequent proteasomal degradation of target proteins. Has an essential role in mediating growth by negatively regulating insulin signaling. It also has a role in maintaining presynaptic function in the neuromuscular junction synapses of third-instar larvae. This is Protein cereblon from Drosophila yakuba (Fruit fly).